A 439-amino-acid polypeptide reads, in one-letter code: AT-hook motif nuclear-localized protein 13 (439 aa).

Disordered regions lie at residues 1 to 46, 69 to 216, and 342 to 439; these read MDSR…NSYN, QRLP…LGGT, and GRKQ…NSPQ. Composition is skewed to low complexity over residues 9 to 31 and 79 to 95; these read QQQQ…QQQQ and PHQP…PQQQ. The span at 109–120 shows a compositional bias: polar residues; that stretch reads SPSSVAATQQHS. The span at 130–139 shows a compositional bias: basic residues; the sequence is VKKKRGRPRK. Residues 131–139 carry the Bipartite nuclear localization signal motif; the sequence is KKKRGRPRK. The segment at residues 131–143 is a DNA-binding region (a.T hook 1); sequence KKKRGRPRKYAAD. Composition is skewed to gly residues over residues 143-152 and 171-183; these read DGGGGGGGGS and YGGG…GGDS. The segment at residues 196–208 is a DNA-binding region (a.T hook 2); it reads KRNRGRPPGSGKK. Residues 217–359 enclose the PPC domain; that stretch reads GGVGFTPHVI…GRAQNTPEPA (143 aa). Residues 347–357 show a composition bias toward polar residues; that stretch reads QSAGRAQNTPE. Low complexity-rich tracts occupy residues 376-386 and 403-416; these read SPRSQGQQHSS and NNNN…FGNS. Over residues 428 to 439 the composition is skewed to polar residues; it reads MYQNLWPGNSPQ.

The protein localises to the nucleus. Its function is as follows. Transcription factor that specifically binds AT-rich DNA sequences related to the nuclear matrix attachment regions (MARs). In Arabidopsis thaliana (Mouse-ear cress), this protein is AT-hook motif nuclear-localized protein 13.